We begin with the raw amino-acid sequence, 329 residues long: MTPKLIIHGGASSLDDKGGLATVRQSLHQIVAAVYETLTAGGSAMDAVVQGCELLENEPRFNAGTGSVLQSDGQVRMSASLMDGDRQNFSGVINVSRIKNPIQMAQFLQGQTDRILSDYGAADLAREMQLPIYDPATDFRIQEWMEERGEDVRKKMARLIADPTVGIEARKGTIGVVALDANGKIAAGTSTGGKGLERIGRVSDSAMPAGNYATRFAGVSCTGVGEDIINECLAAKVVIRVKDGQNLAQAMAKSITEALENNTDLGAIALDHQGHIAWGKTCPVLLAAYHTGTAIGDTLELTDGDHYGNASILKLQKTVKKIQTKTRGK.

The Nucleophile role is filled by threonine 173. Residues 201–204 (RVSD) and 222–225 (TGVG) each bind substrate.

It belongs to the Ntn-hydrolase family. In terms of assembly, heterotetramer of two alpha and two beta chains arranged as a dimer of alpha/beta heterodimers. In terms of processing, cleaved into an alpha and beta chain by autocatalysis; this activates the enzyme. The N-terminal residue of the beta subunit is responsible for the nucleophile hydrolase activity.

The enzyme catalyses Cleavage of a beta-linked Asp residue from the N-terminus of a polypeptide.. Its function is as follows. Degrades proteins damaged by L-isoaspartyl residue formation (also known as beta-Asp residues). Probably performs the final step in the degradation of the reserve polymer cyanophycin (depolymerizes the building block L-beta-Asp-Arg). Also has L-asparaginase activity. This is Isoaspartyl peptidase/L-asparaginase from Synechocystis sp. (strain ATCC 27184 / PCC 6803 / Kazusa).